The chain runs to 790 residues: Choline transporter-like 2 (790 aa).

Residues Pro-47–Val-67 traverse the membrane as a helical segment. N-linked (GlcNAc...) asparagine glycans are attached at residues Asn-102 and Asn-259. Helical transmembrane passes span Ile-288–Ile-308, Ile-319–Trp-339, and Leu-344–Phe-364. Asn-384 is a glycosylation site (N-linked (GlcNAc...) asparagine). The next 2 helical transmembrane spans lie at Leu-400–Leu-420 and Leu-449–Leu-469. An N-linked (GlcNAc...) asparagine glycan is attached at Asn-483. 4 helical membrane-spanning segments follow: residues Val-545 to Phe-565, Val-592 to Ile-612, Val-691 to Thr-711, and Phe-728 to Val-748.

Belongs to the CTL (choline transporter-like) family.

Its subcellular location is the membrane. The chain is Choline transporter-like 2 from Anopheles gambiae (African malaria mosquito).